Consider the following 132-residue polypeptide: Phosphoribosyl-AMP cyclohydrolase (132 aa).

D82 is a binding site for Mg(2+). A Zn(2+)-binding site is contributed by C83. Positions 84 and 86 each coordinate Mg(2+). The Zn(2+) site is built by C99 and C106.

Belongs to the PRA-CH family. As to quaternary structure, homodimer. The cofactor is Mg(2+). Zn(2+) serves as cofactor.

Its subcellular location is the cytoplasm. It carries out the reaction 1-(5-phospho-beta-D-ribosyl)-5'-AMP + H2O = 1-(5-phospho-beta-D-ribosyl)-5-[(5-phospho-beta-D-ribosylamino)methylideneamino]imidazole-4-carboxamide. It functions in the pathway amino-acid biosynthesis; L-histidine biosynthesis; L-histidine from 5-phospho-alpha-D-ribose 1-diphosphate: step 3/9. Its function is as follows. Catalyzes the hydrolysis of the adenine ring of phosphoribosyl-AMP. This chain is Phosphoribosyl-AMP cyclohydrolase, found in Paramagnetospirillum magneticum (strain ATCC 700264 / AMB-1) (Magnetospirillum magneticum).